The sequence spans 236 residues: Rho-related GTP-binding protein RhoV (236 aa).

The disordered stretch occupies residues 1–27; the sequence is MPPRELSEAEPPPLPASTPPPRRRSAP. The span at 10–20 shows a compositional bias: pro residues; it reads EPPPLPASTPP. Ser-25 carries the post-translational modification Phosphoserine. GTP-binding positions include 38 to 45, 85 to 89, and 143 to 146; these read GDGAVGKS, DTAGQ, and TQAD. The S-palmitoyl cysteine moiety is linked to residue Cys-234.

Belongs to the small GTPase superfamily. Rho family. As to quaternary structure, interacts with PAK2. It depends on Mg(2+) as a cofactor.

It is found in the cell membrane. It localises to the endosome membrane. Its function is as follows. Plays a role in the control of the actin cytoskeleton via activation of the JNK pathway. The polypeptide is Rho-related GTP-binding protein RhoV (Mus musculus (Mouse)).